The primary structure comprises 289 residues: ATP synthase gamma chain (289 aa).

It belongs to the ATPase gamma chain family. In terms of assembly, F-type ATPases have 2 components, CF(1) - the catalytic core - and CF(0) - the membrane proton channel. CF(1) has five subunits: alpha(3), beta(3), gamma(1), delta(1), epsilon(1). CF(0) has three main subunits: a, b and c.

Its subcellular location is the cell inner membrane. Functionally, produces ATP from ADP in the presence of a proton gradient across the membrane. The gamma chain is believed to be important in regulating ATPase activity and the flow of protons through the CF(0) complex. The polypeptide is ATP synthase gamma chain (Polynucleobacter necessarius subsp. necessarius (strain STIR1)).